The chain runs to 361 residues: S-adenosylmethionine:tRNA ribosyltransferase-isomerase (361 aa).

It belongs to the QueA family. In terms of assembly, monomer.

Its subcellular location is the cytoplasm. The enzyme catalyses 7-aminomethyl-7-carbaguanosine(34) in tRNA + S-adenosyl-L-methionine = epoxyqueuosine(34) in tRNA + adenine + L-methionine + 2 H(+). The protein operates within tRNA modification; tRNA-queuosine biosynthesis. Its function is as follows. Transfers and isomerizes the ribose moiety from AdoMet to the 7-aminomethyl group of 7-deazaguanine (preQ1-tRNA) to give epoxyqueuosine (oQ-tRNA). This chain is S-adenosylmethionine:tRNA ribosyltransferase-isomerase, found in Rhizobium johnstonii (strain DSM 114642 / LMG 32736 / 3841) (Rhizobium leguminosarum bv. viciae).